The following is a 428-amino-acid chain: uncharacterized protein (428 aa).

Residues 72–91 (SQGSPVAPSPNHRSTMYSSS) form a disordered region. Serine 127 carries the phosphoserine modification.

This is an uncharacterized protein from Saccharomyces cerevisiae (strain ATCC 204508 / S288c) (Baker's yeast).